The sequence spans 535 residues: Dynein axonemal assembly factor 8 (535 aa).

Disordered stretches follow at residues 112–215 (AELA…QERR), 228–267 (RDAC…EGPP), 344–380 (PADT…QGMR), 395–444 (TVPP…LRSC), and 461–535 (IAQP…LDQL). The span at 125-139 (RTKDASSQEGRDPGR) shows a compositional bias: basic and acidic residues. Residues 166 to 175 (GSLSFNTKGS) are compositionally biased toward polar residues. Serine 175 carries the post-translational modification Phosphoserine. Serine 362 is subject to Phosphoserine. Over residues 415 to 424 (DSEEEEEEVE) the composition is skewed to acidic residues. Residues 435–444 (SPSSLGLRSC) show a composition bias toward polar residues.

The protein localises to the dynein axonemal particle. It localises to the cytoplasm. Functionally, in cyliated cells, dynein axonemal particle-specific protein required for deployment of ODA to the axoneme. Interacts with outer dynein arm (ODA) subunits. The sequence is that of Dynein axonemal assembly factor 8 (DNAAF8) from Macaca fascicularis (Crab-eating macaque).